A 448-amino-acid polypeptide reads, in one-letter code: Probable xyloglucan 6-xylosyltransferase 1 (448 aa).

Over 1-19 (MWVAERVVGERRMREIQRF) the chain is Cytoplasmic. Residues 20–42 (ARNAKLTVVCLLLTVVVLRGTVG) traverse the membrane as a helical; Signal-anchor for type II membrane protein segment. At 43 to 448 (AGKFGTPQQD…AFKAMKTTST (406 aa)) the chain is on the lumenal side. The tract at residues 71–113 (HHDALSRGGGSSSSSGRAAQRDDEPDPPPRTLRDPPYTLGPKI) is disordered. Asn-421 is a glycosylation site (N-linked (GlcNAc...) asparagine).

This sequence belongs to the glycosyltransferase 34 family.

It localises to the golgi apparatus membrane. The catalysed reaction is Transfers an alpha-D-xylosyl residue from UDP-D-xylose to a glucose residue in xyloglucan, forming an alpha-(1-&gt;6)-D-xylosyl-D-glucose linkage.. Probable xyloglucan xylosyltransferase involved in the biosynthesis of xyloglucan in roots. The sequence is that of Probable xyloglucan 6-xylosyltransferase 1 from Oryza sativa subsp. indica (Rice).